A 271-amino-acid polypeptide reads, in one-letter code: Phosphoribosylformylglycinamidine synthase subunit PurQ (271 aa).

In terms of domain architecture, Glutamine amidotransferase type-1 spans 7 to 253 (KVAVLRMEGT…FGYQVGRREG (247 aa)). Cysteine 104 serves as the catalytic Nucleophile. Residues histidine 238 and glutamate 240 contribute to the active site.

Part of the FGAM synthase complex composed of 1 PurL, 1 PurQ and 2 PurS subunits.

The protein resides in the cytoplasm. It catalyses the reaction N(2)-formyl-N(1)-(5-phospho-beta-D-ribosyl)glycinamide + L-glutamine + ATP + H2O = 2-formamido-N(1)-(5-O-phospho-beta-D-ribosyl)acetamidine + L-glutamate + ADP + phosphate + H(+). The enzyme catalyses L-glutamine + H2O = L-glutamate + NH4(+). Its pathway is purine metabolism; IMP biosynthesis via de novo pathway; 5-amino-1-(5-phospho-D-ribosyl)imidazole from N(2)-formyl-N(1)-(5-phospho-D-ribosyl)glycinamide: step 1/2. Its function is as follows. Part of the phosphoribosylformylglycinamidine synthase complex involved in the purines biosynthetic pathway. Catalyzes the ATP-dependent conversion of formylglycinamide ribonucleotide (FGAR) and glutamine to yield formylglycinamidine ribonucleotide (FGAM) and glutamate. The FGAM synthase complex is composed of three subunits. PurQ produces an ammonia molecule by converting glutamine to glutamate. PurL transfers the ammonia molecule to FGAR to form FGAM in an ATP-dependent manner. PurS interacts with PurQ and PurL and is thought to assist in the transfer of the ammonia molecule from PurQ to PurL. This chain is Phosphoribosylformylglycinamidine synthase subunit PurQ, found in Archaeoglobus fulgidus (strain ATCC 49558 / DSM 4304 / JCM 9628 / NBRC 100126 / VC-16).